A 354-amino-acid polypeptide reads, in one-letter code: tRNA pseudouridine synthase D (354 aa).

Asp-86 acts as the Nucleophile in catalysis. Residues 162 to 309 (GVPNYFGPQR…LEVGRRALRL (148 aa)) form the TRUD domain.

This sequence belongs to the pseudouridine synthase TruD family.

It carries out the reaction uridine(13) in tRNA = pseudouridine(13) in tRNA. In terms of biological role, responsible for synthesis of pseudouridine from uracil-13 in transfer RNAs. The chain is tRNA pseudouridine synthase D from Methylococcus capsulatus (strain ATCC 33009 / NCIMB 11132 / Bath).